The chain runs to 306 residues: Lipoyl synthase (306 aa).

The [4Fe-4S] cluster site is built by cysteine 55, cysteine 60, cysteine 66, cysteine 81, cysteine 85, cysteine 88, and serine 294. The 217-residue stretch at 67–283 (WNHRTATFLL…RAYALARGFR (217 aa)) folds into the Radical SAM core domain.

Belongs to the radical SAM superfamily. Lipoyl synthase family. [4Fe-4S] cluster serves as cofactor.

The protein resides in the cytoplasm. The enzyme catalyses [[Fe-S] cluster scaffold protein carrying a second [4Fe-4S](2+) cluster] + N(6)-octanoyl-L-lysyl-[protein] + 2 oxidized [2Fe-2S]-[ferredoxin] + 2 S-adenosyl-L-methionine + 4 H(+) = [[Fe-S] cluster scaffold protein] + N(6)-[(R)-dihydrolipoyl]-L-lysyl-[protein] + 4 Fe(3+) + 2 hydrogen sulfide + 2 5'-deoxyadenosine + 2 L-methionine + 2 reduced [2Fe-2S]-[ferredoxin]. Its pathway is protein modification; protein lipoylation via endogenous pathway; protein N(6)-(lipoyl)lysine from octanoyl-[acyl-carrier-protein]: step 2/2. Functionally, catalyzes the radical-mediated insertion of two sulfur atoms into the C-6 and C-8 positions of the octanoyl moiety bound to the lipoyl domains of lipoate-dependent enzymes, thereby converting the octanoylated domains into lipoylated derivatives. This chain is Lipoyl synthase, found in Chloroflexus aggregans (strain MD-66 / DSM 9485).